The primary structure comprises 259 residues: Truncated Ankyrin repeat protein OPG003 (259 aa).

Belongs to the orthopoxvirus OPG003 family.

The protein is Truncated Ankyrin repeat protein OPG003 (OPG003) of Vaccinia virus (strain Copenhagen) (VACV).